Reading from the N-terminus, the 152-residue chain is MKSERQQKILEIIQSEDIETQEELVEKLRELGYDVTQATVSRDIKELRLTKVLTETGKYKYAVLSGPEANITEKLIKVFSESIIKYDTADNLVIIKTITGAAQGAAAAIDSLNWPEVIGTIAGDDTIFIATKGNAAAEKIVERIKAILSQGD.

Belongs to the ArgR family.

The protein resides in the cytoplasm. Its pathway is amino-acid biosynthesis; L-arginine biosynthesis [regulation]. Regulates arginine biosynthesis genes. This Caldicellulosiruptor saccharolyticus (strain ATCC 43494 / DSM 8903 / Tp8T 6331) protein is Arginine repressor.